The sequence spans 314 residues: tRNA pseudouridine synthase B (314 aa).

H43 is a substrate binding site. The active-site Nucleophile is the D48. The substrate site is built by Y76, Y179, and L200.

Belongs to the pseudouridine synthase TruB family. Type 1 subfamily.

The catalysed reaction is uridine(55) in tRNA = pseudouridine(55) in tRNA. Responsible for synthesis of pseudouridine from uracil-55 in the psi GC loop of transfer RNAs. This Escherichia coli O157:H7 protein is tRNA pseudouridine synthase B.